Here is a 1251-residue protein sequence, read N- to C-terminus: Botulinum neurotoxin type E (1251 aa).

Residue His212 coordinates Zn(2+). The active site involves Glu213. Zn(2+)-binding residues include His216 and Glu251. Cys412 and Cys426 are joined by a disulfide. Positions Lys423–Leu819 are translocation domain (TD). Positions Asn466–Asn515 are belt. Residues Lys845–Pro1067 form an N-terminus of receptor binding domain (N-RBD) region. Positions Asn1068–Lys1251 are C-terminus of receptor binding domain (C-RBD). A Host ganglioside-binding motif motif is present at residues Ser1221–Tyr1224.

It belongs to the peptidase M27 family. As to quaternary structure, heterodimer; disulfide-linked heterodimer of a light chain (LC) and a heavy chain (HC). The LC has the proteolytic/pharmacological activity, while the N- and C-terminal of the HC mediate channel formation and toxin binding, respectively. Interacts with host synaptic vesicle glycoproteins SV2A and SV2B which probably serve as coreceptors. It depends on Zn(2+) as a cofactor.

Its subcellular location is the secreted. It localises to the host cytoplasm. The protein localises to the host cytosol. The protein resides in the host synapse. It is found in the host presynaptic cell membrane. Its subcellular location is the host cytoplasmic vesicle. It localises to the host secretory vesicle. The protein localises to the host synaptic vesicle membrane. The catalysed reaction is Limited hydrolysis of proteins of the neuroexocytosis apparatus, synaptobrevins, SNAP25 or syntaxin. No detected action on small molecule substrates.. Functionally, botulinum toxin causes flaccid paralysis by inhibiting neurotransmitter (acetylcholine) release from the presynaptic membranes of nerve terminals of eukaryotic host skeletal and autonomic nervous system, with frequent heart or respiratory failure. Precursor of botulinum neurotoxin E which has 2 coreceptors; complex polysialylated gangliosides found on neural tissue and specific membrane-anchored proteins found in synaptic vesicles. Receptor proteins are exposed on host presynaptic cell membrane during neurotransmitter release, when the toxin heavy chain (HC) binds to them. Upon synaptic vesicle recycling the toxin is taken up via the endocytic pathway. When the pH of the toxin-containing endosome drops a structural rearrangement occurs so that the N-terminus of the HC forms pores that allows the light chain (LC) to translocate into the cytosol. Once in the cytosol the disulfide bond linking the 2 subunits is reduced and LC cleaves its target protein on synaptic vesicles, preventing their fusion with the cytoplasmic membrane and thus neurotransmitter release. Has proteolytic activity. After translocation into the eukaryotic host cytosol, LC hydrolyzes the '180-Arg-|-Ile-181' bond in SNAP25, blocking neurotransmitter release. Its function is as follows. Responsible for host epithelial cell transcytosis, host nerve cell targeting and translocation of light chain (LC) into host cytosol. Composed of 3 subdomains; the translocation domain (TD), and N-terminus and C-terminus of the receptor-binding domain (RBD). The RBD is responsible for the adherence of the toxin to the cell surface. It simultaneously recognizes 2 coreceptors; host polysialated gangliosides and the receptor proteins SV2A and SV2B in close proximity on host synaptic vesicles. Interaction with SV2 proteins requires SV2 glycosylation. The N-terminus of the TD wraps an extended belt around the perimeter of the LC, protecting Zn(2+) in the active site; it may also prevent premature LC dissociation from the translocation channel and protect toxin prior to translocation. The TD inserts into synaptic vesicle membrane to allow translocation into the host cytosol. Binds ganglioside GD1a in vitro. The sequence is that of Botulinum neurotoxin type E from Clostridium butyricum.